The following is a 75-amino-acid chain: Pi-hexatoxin-Hi1d (75 aa).

6 disulfide bridges follow: cysteine 3/cysteine 18, cysteine 10/cysteine 23, cysteine 17/cysteine 33, cysteine 40/cysteine 55, cysteine 47/cysteine 60, and cysteine 54/cysteine 71. 2 Domain repeats span residues 3–33 and 40–71; these read CIRKWLSCVDRKNDCCEGLECYKRRHSFEVC and CLVKWKQCDGRERDCCAGLECWKRSGNKSSVC. Positions 3–71 are 2 X approximate repeats with cysteine pattern C-C-CC-C-C; it reads CIRKWLSCVD…KRSGNKSSVC (69 aa).

This sequence belongs to the psalmotoxin-1 family. Double-knot toxin subfamily. As to expression, expressed by the venom gland.

The protein resides in the secreted. In terms of biological role, this toxin potently and selectively inhibits ASIC1a, an isoform of the gene ASIC1. It incompletely inhibits ASIC1a activation in a pH-independent and slowly reversible manner. This toxin acts by binding to and stabilizing the closed state of the channel, thereby impeding the transition into a conducting state. This toxin may bind to the acidic pocket of ASIC1a, since mutation of a key residue of this pocket (Arg-350) abolishes the ability of the toxin to inhibit ASIC1a. In vivo, this toxin protects the brain from neuronal injury when administered up to 8 hours after stroke onset. The sequence is that of Pi-hexatoxin-Hi1d from Hadronyche infensa (Fraser island funnel-web spider).